Reading from the N-terminus, the 478-residue chain is GTPase Obg (478 aa).

The Obg domain maps to 2 to 159 (TTFVDRVELH…QDIHLELKTV (158 aa)). The interval 60 to 88 (YHHSPHRKATNGKPGEGGNRSGKDGQDLV) is disordered. The OBG-type G domain occupies 160 to 330 (ADVALVGYPS…LSFALAELVA (171 aa)). GTP is bound by residues 166 to 173 (GYPSAGKS), 191 to 195 (FTTLV), 212 to 215 (DVPG), 282 to 285 (NKID), and 311 to 313 (SAV). Residues serine 173 and threonine 193 each coordinate Mg(2+). The OCT domain maps to 348–430 (PKAVDDAGFT…DNAVVFDWEP (83 aa)). Residues 438 to 478 (MLGRRGEDHRFEAPRPAAQRRRDRDAERDEAQQEFDGFEPF) are disordered. 2 stretches are compositionally biased toward basic and acidic residues: residues 439 to 450 (LGRRGEDHRFEA) and 457 to 468 (RRRDRDAERDEA). Acidic residues predominate over residues 469 to 478 (QQEFDGFEPF).

This sequence belongs to the TRAFAC class OBG-HflX-like GTPase superfamily. OBG GTPase family. Monomer. It depends on Mg(2+) as a cofactor.

It localises to the cytoplasm. It is found in the cell membrane. Functionally, plays an unknown essential role and a regulatory role in sporulation. Overexpression suppresses sporulation although cell growth rate was not reduced. Impaired differentiation was eliminated by addition of decoyinine, an inhibitor of GMP synthesis. Overexpression has no effect on undecylprodigiosin production, but decreases actinorhodin production. In terms of biological role, an essential GTPase which binds GTP, GDP and possibly (p)ppGpp with moderate affinity, with high nucleotide exchange rates and a fairly low GTP hydrolysis rate. Plays a role in control of the cell cycle, stress response, ribosome biogenesis and in those bacteria that undergo differentiation, in morphogenesis control. The chain is GTPase Obg from Streptomyces coelicolor (strain ATCC BAA-471 / A3(2) / M145).